Here is a 204-residue protein sequence, read N- to C-terminus: Holliday junction branch migration complex subunit RuvA (204 aa).

The interval 1–64 is domain I; the sequence is MIGRLRGILL…EDAQLLYGFN (64 aa). The segment at 65–143 is domain II; it reads TVKERALFRE…GWSAGDLFTP (79 aa). A flexible linker region spans residues 144–155; the sequence is FTDAAPVDSGST. A domain III region spans residues 156–204; it reads SSNSAEEEAVSALLALGYKPVQASKVVSQIAKPDMTSEQLIREALKSMV.

Belongs to the RuvA family. In terms of assembly, homotetramer. Forms an RuvA(8)-RuvB(12)-Holliday junction (HJ) complex. HJ DNA is sandwiched between 2 RuvA tetramers; dsDNA enters through RuvA and exits via RuvB. An RuvB hexamer assembles on each DNA strand where it exits the tetramer. Each RuvB hexamer is contacted by two RuvA subunits (via domain III) on 2 adjacent RuvB subunits; this complex drives branch migration. In the full resolvosome a probable DNA-RuvA(4)-RuvB(12)-RuvC(2) complex forms which resolves the HJ.

The protein resides in the cytoplasm. Functionally, the RuvA-RuvB-RuvC complex processes Holliday junction (HJ) DNA during genetic recombination and DNA repair, while the RuvA-RuvB complex plays an important role in the rescue of blocked DNA replication forks via replication fork reversal (RFR). RuvA specifically binds to HJ cruciform DNA, conferring on it an open structure. The RuvB hexamer acts as an ATP-dependent pump, pulling dsDNA into and through the RuvAB complex. HJ branch migration allows RuvC to scan DNA until it finds its consensus sequence, where it cleaves and resolves the cruciform DNA. The chain is Holliday junction branch migration complex subunit RuvA from Vibrio vulnificus (strain CMCP6).